A 349-amino-acid chain; its full sequence is Gibberellin 3-beta-dioxygenase 3 (349 aa).

Positions 201 to 305 (SIQSFLQLNS…RVSAAYFAGP (105 aa)) constitute a Fe2OG dioxygenase domain. Fe cation-binding residues include His226, Asp228, and His286. The active site involves Arg296.

This sequence belongs to the iron/ascorbate-dependent oxidoreductase family. GA3OX subfamily. It depends on L-ascorbate as a cofactor. The cofactor is Fe cation. Expressed in flower clusters and siliques.

It catalyses the reaction gibberellin A20 + 2-oxoglutarate + O2 = gibberellin A1 + succinate + CO2. It functions in the pathway plant hormone biosynthesis; gibberellin biosynthesis. Converts the inactive gibberellin (GA) precursors GA9 and GA20 in the bioactives gibberellins GA4 and GA1. Involved in the production of bioactive GA for reproductive development. This chain is Gibberellin 3-beta-dioxygenase 3 (GA3OX3), found in Arabidopsis thaliana (Mouse-ear cress).